A 355-amino-acid polypeptide reads, in one-letter code: Protein RecA (355 aa).

ATP is bound at residue 67–74 (GPESSGKT). The disordered stretch occupies residues 335 to 355 (NSLVSDVESEDEGASESNEEF). Over residues 341–355 (VESEDEGASESNEEF) the composition is skewed to acidic residues.

Belongs to the RecA family.

It localises to the cytoplasm. Can catalyze the hydrolysis of ATP in the presence of single-stranded DNA, the ATP-dependent uptake of single-stranded DNA by duplex DNA, and the ATP-dependent hybridization of homologous single-stranded DNAs. It interacts with LexA causing its activation and leading to its autocatalytic cleavage. This chain is Protein RecA, found in Sodalis glossinidius.